The sequence spans 106 residues: BLOC-1-related complex subunit 7 (106 aa).

The protein belongs to the BORCS7 family. As to quaternary structure, component of the BLOC-one-related complex (BORC) which is composed of BLOC1S1, BLOC1S2, BORCS5, BORCS6, BORCS7, BORCS8, KXD1 and SNAPIN.

It is found in the lysosome membrane. In terms of biological role, as part of the BORC complex may play a role in lysosomes movement and localization at the cell periphery. Associated with the cytosolic face of lysosomes, the BORC complex may recruit ARL8B and couple lysosomes to microtubule plus-end-directed kinesin motor. This chain is BLOC-1-related complex subunit 7, found in Pongo abelii (Sumatran orangutan).